A 580-amino-acid chain; its full sequence is F-box only protein 24 (580 aa).

The region spanning 36–82 (PISIQLFPPELVEHIISFLPVRDLVALGQTCRYFHEVCDAEGVWRRI) is the F-box domain. The RCC1 repeat unit spans residues 376-425 (GRIFMQGNNRYGQLGTGDKMDRGEPTQVRYLQRPITLWCGLNHSLVLSQS).

Directly interacts with SKP1 and CUL1.

Its function is as follows. Substrate-recognition component of the SCF (SKP1-CUL1-F-box protein)-type E3 ubiquitin ligase complex. This Macaca fascicularis (Crab-eating macaque) protein is F-box only protein 24 (FBXO24).